The primary structure comprises 100 residues: Small ribosomal subunit protein uS14c (100 aa).

It belongs to the universal ribosomal protein uS14 family. Part of the 30S ribosomal subunit.

It localises to the plastid. Its subcellular location is the chloroplast. Binds 16S rRNA, required for the assembly of 30S particles. The protein is Small ribosomal subunit protein uS14c of Cyanidium caldarium (Red alga).